A 168-amino-acid chain; its full sequence is DNA damage-inducible transcript 3 protein (168 aa).

An interaction with TRIB3 region spans residues Leu-10 to Leu-18. Residues Leu-10–Gln-26 form an N-terminal region. Residues Ser-14, Ser-15, Ser-30, and Ser-31 each carry the phosphoserine; by CK2 modification. Polar residues predominate over residues Ser-30–Gly-43. The disordered stretch occupies residues Ser-30–Val-168. Low complexity predominate over residues Ser-74–Ser-87. A phosphoserine; by MAPK14 mark is found at Ser-78 and Ser-81. A bZIP domain is found at Gly-98 to Pro-161. Residues Arg-101–Lys-129 are basic motif. Residues Arg-118–His-162 are compositionally biased toward basic and acidic residues. The tract at residues Leu-133–Leu-147 is leucine-zipper.

This sequence belongs to the bZIP family. In terms of assembly, heterodimer. Interacts with TCF7L2/TCF4, EP300/P300, HDAC1, HDAC5 and HDAC6. Interacts with TRIB3 which blocks its association with EP300/P300. Interacts with FOXO3, CEBPB and ATF4. Post-translationally, ubiquitinated, leading to its degradation by the proteasome. Phosphorylation at serine residues by MAPK14 enhances its transcriptional activation activity while phosphorylation at serine residues by CK2 inhibits its transcriptional activation activity.

The protein localises to the cytoplasm. It localises to the nucleus. In terms of biological role, multifunctional transcription factor in ER stress response. Plays an essential role in the response to a wide variety of cell stresses and induces cell cycle arrest and apoptosis in response to ER stress. Plays a dual role both as an inhibitor of CCAAT/enhancer-binding protein (C/EBP) function and as an activator of other genes. Acts as a dominant-negative regulator of C/EBP-induced transcription: dimerizes with members of the C/EBP family, impairs their association with C/EBP binding sites in the promoter regions, and inhibits the expression of C/EBP regulated genes. Positively regulates the transcription of TRIB3, IL6, IL8, IL23, TNFRSF10B/DR5, PPP1R15A/GADD34, BBC3/PUMA, BCL2L11/BIM and ERO1L. Negatively regulates; expression of BCL2 and MYOD1, ATF4-dependent transcriptional activation of asparagine synthetase (ASNS), CEBPA-dependent transcriptional activation of hepcidin (HAMP) and CEBPB-mediated expression of peroxisome proliferator-activated receptor gamma (PPARG). Inhibits the canonical Wnt signaling pathway by binding to TCF7L2/TCF4, impairing its DNA-binding properties and repressing its transcriptional activity. Plays a regulatory role in the inflammatory response through the induction of caspase-11 (CASP4/CASP11) which induces the activation of caspase-1 (CASP1) and both these caspases increase the activation of pro-IL1B to mature IL1B which is involved in the inflammatory response. This chain is DNA damage-inducible transcript 3 protein (DDIT3), found in Cricetulus griseus (Chinese hamster).